A 79-amino-acid polypeptide reads, in one-letter code: uncharacterized protein (79 aa).

This is an uncharacterized protein from Homo sapiens (Human).